The following is a 204-amino-acid chain: NADH-quinone oxidoreductase subunit C (204 aa).

This sequence belongs to the complex I 30 kDa subunit family. In terms of assembly, NDH-1 is composed of 14 different subunits. Subunits NuoB, C, D, E, F, and G constitute the peripheral sector of the complex.

The protein resides in the cell inner membrane. It catalyses the reaction a quinone + NADH + 5 H(+)(in) = a quinol + NAD(+) + 4 H(+)(out). Its function is as follows. NDH-1 shuttles electrons from NADH, via FMN and iron-sulfur (Fe-S) centers, to quinones in the respiratory chain. The immediate electron acceptor for the enzyme in this species is believed to be ubiquinone. Couples the redox reaction to proton translocation (for every two electrons transferred, four hydrogen ions are translocated across the cytoplasmic membrane), and thus conserves the redox energy in a proton gradient. The protein is NADH-quinone oxidoreductase subunit C of Vesicomyosocius okutanii subsp. Calyptogena okutanii (strain HA).